Here is a 289-residue protein sequence, read N- to C-terminus: ATP synthase mitochondrial F1 complex assembly factor 2 (289 aa).

Residues 1-40 (MWRRCLRLRDVGRRLLNLPRSGLTASEGLGPKLPTPIRAY) constitute a mitochondrion transit peptide. The residue at position 133 (Lys-133) is an N6-succinyllysine.

Belongs to the ATP12 family. As to quaternary structure, interacts with ATP5F1B; involved in the assembly of the F1 component of the mitochondrial ATP synthase (ATPase). Interacts with FMC1.

It localises to the mitochondrion inner membrane. In terms of biological role, plays a role in the assembly of the F1 component of the mitochondrial ATP synthase (ATPase). In Bos taurus (Bovine), this protein is ATP synthase mitochondrial F1 complex assembly factor 2 (ATPAF2).